The sequence spans 266 residues: Putative carbamate hydrolase RutD (266 aa).

It belongs to the AB hydrolase superfamily. Hydrolase RutD family.

The enzyme catalyses carbamate + 2 H(+) = NH4(+) + CO2. Functionally, involved in pyrimidine catabolism. May facilitate the hydrolysis of carbamate, a reaction that can also occur spontaneously. The chain is Putative carbamate hydrolase RutD from Escherichia coli O150:H5 (strain SE15).